The following is a 185-amino-acid chain: MKLVSVALMYLGSLAFLGADTARLDVASEFRKKWNKWALSRGKRELRMSSSYPTGLADVKAGPAQTLIRPQDMKGASRSPEDSSPDAARIRVKRYRQSMNNFQGLRSFGCRFGTCTVQKLAHQIYQFTDKDKDNVAPRSKISPQGYGRRRRRSLPEAGPGRTLVSSKPQAHGAPAPPSGSAPHFL.

A signal peptide spans 1 to 21 (MKLVSVALMYLGSLAFLGADT). R41 carries the arginine amide modification. Residues 45–92 (ELRMSSSYPTGLADVKAGPAQTLIRPQDMKGASRSPEDSSPDAARIRV) constitute a propeptide that is removed on maturation. The interval 60–87 (KAGPAQTLIRPQDMKGASRSPEDSSPDA) is disordered. Cysteines 110 and 115 form a disulfide. Residues 133–185 (DNVAPRSKISPQGYGRRRRRSLPEAGPGRTLVSSKPQAHGAPAPPSGSAPHFL) form a disordered region. Tyrosine amide is present on Y146. The propeptide at 148-185 (RRRRRSLPEAGPGRTLVSSKPQAHGAPAPPSGSAPHFL) is preproAM C-terminal fragment.

It belongs to the adrenomedullin family. As to expression, highest levels found in pheochromocytoma and adrenal medulla. Also found in lung, ventricle and kidney tissues.

The protein localises to the secreted. Its function is as follows. Adrenomedullin/ADM and proadrenomedullin N-20 terminal peptide/PAMP are peptide hormones that act as potent hypotensive and vasodilatator agents. Numerous actions have been reported most related to the physiologic control of fluid and electrolyte homeostasis. In the kidney, ADM is diuretic and natriuretic, and both ADM and PAMP inhibit aldosterone secretion by direct adrenal actions. In pituitary gland, both peptides at physiologically relevant doses inhibit basal ACTH secretion. Both peptides appear to act in brain and pituitary gland to facilitate the loss of plasma volume, actions which complement their hypotensive effects in blood vessels. In terms of biological role, ADM function is mediated by the CALCRL-RAMP2 and CALCRL-RAMP3 receptor complexes with ADM showing the highest potency for the CALCRL-RAMP2 complex. The polypeptide is Pro-adrenomedullin (Homo sapiens (Human)).